The following is a 240-amino-acid chain: Pyridoxine 5'-phosphate synthase (240 aa).

Asn-7 contacts 3-amino-2-oxopropyl phosphate. Residue 9–10 (DH) coordinates 1-deoxy-D-xylulose 5-phosphate. Arg-18 provides a ligand contact to 3-amino-2-oxopropyl phosphate. Catalysis depends on His-43, which acts as the Proton acceptor. 1-deoxy-D-xylulose 5-phosphate-binding residues include Arg-45 and His-50. Glu-70 serves as the catalytic Proton acceptor. 1-deoxy-D-xylulose 5-phosphate is bound at residue Thr-100. The active-site Proton donor is the His-191. Residues Gly-192 and 213–214 (GH) contribute to the 3-amino-2-oxopropyl phosphate site.

It belongs to the PNP synthase family. As to quaternary structure, homooctamer; tetramer of dimers.

The protein resides in the cytoplasm. The enzyme catalyses 3-amino-2-oxopropyl phosphate + 1-deoxy-D-xylulose 5-phosphate = pyridoxine 5'-phosphate + phosphate + 2 H2O + H(+). The protein operates within cofactor biosynthesis; pyridoxine 5'-phosphate biosynthesis; pyridoxine 5'-phosphate from D-erythrose 4-phosphate: step 5/5. In terms of biological role, catalyzes the complicated ring closure reaction between the two acyclic compounds 1-deoxy-D-xylulose-5-phosphate (DXP) and 3-amino-2-oxopropyl phosphate (1-amino-acetone-3-phosphate or AAP) to form pyridoxine 5'-phosphate (PNP) and inorganic phosphate. This chain is Pyridoxine 5'-phosphate synthase, found in Synechococcus elongatus (strain ATCC 33912 / PCC 7942 / FACHB-805) (Anacystis nidulans R2).